A 92-amino-acid polypeptide reads, in one-letter code: Large ribosomal subunit protein bL27 (92 aa).

Residues 1–10 constitute a propeptide that is removed on maturation; that stretch reads MLLQLQIQLF.

The protein belongs to the bacterial ribosomal protein bL27 family. Post-translationally, the N-terminus is cleaved by ribosomal processing cysteine protease Prp.

The polypeptide is Large ribosomal subunit protein bL27 (Aster yellows witches'-broom phytoplasma (strain AYWB)).